Reading from the N-terminus, the 107-residue chain is Heme-degrading monooxygenase (107 aa).

Residues Ile2–Tyr94 form the ABM domain. Position 6 (Asn6) interacts with Fe cation. His76 contacts heme.

This sequence belongs to the antibiotic biosynthesis monooxygenase family. Heme-degrading monooxygenase IsdG subfamily. In terms of assembly, homodimer.

Its subcellular location is the cytoplasm. The enzyme catalyses heme b + 3 reduced [NADPH--hemoprotein reductase] + 3 O2 = biliverdin IXalpha + CO + Fe(2+) + 3 oxidized [NADPH--hemoprotein reductase] + 3 H2O + H(+). Its function is as follows. Allows bacterial pathogens to use the host heme as an iron source. Catalyzes the oxidative degradation of the heme macrocyclic porphyrin ring to the biliverdin in the presence of a suitable electron donor such as ascorbate or NADPH--cytochrome P450 reductase, with subsequent release of free iron. This is Heme-degrading monooxygenase from Bacillus cereus (strain AH187).